Here is a 565-residue protein sequence, read N- to C-terminus: Liver carboxylesterase 1 (565 aa).

A signal peptide spans 1–18 (MWLCALSLISLTACLSLG). C87 and C116 form a disulfide bridge. S221 (acyl-ester intermediate) is an active-site residue. A disulfide bridge connects residues C273 and C284. The active-site Charge relay system is the E353. S378 is subject to Phosphoserine. N388 is a glycosylation site (N-linked (GlcNAc...) asparagine). H466 acts as the Charge relay system in catalysis. The N-linked (GlcNAc...) asparagine glycan is linked to N489.

The protein belongs to the type-B carboxylesterase/lipase family. Homotrimer and homohexamer. Binds to beta-glucuronidase. Detected in kidney, liver and lung.

It is found in the endoplasmic reticulum lumen. The protein resides in the cytoplasm. It localises to the lipid droplet. The enzyme catalyses a carboxylic ester + H2O = an alcohol + a carboxylate + H(+). It catalyses the reaction cholesteryl (9Z-octadecenoate) + H2O = cholesterol + (9Z)-octadecenoate + H(+). The catalysed reaction is 2-(5Z,8Z,11Z,14Z-eicosatetraenoyl)-glycerol + H2O = glycerol + (5Z,8Z,11Z,14Z)-eicosatetraenoate + H(+). It carries out the reaction prostaglandin E2 1-glyceryl ester + H2O = prostaglandin E2 + glycerol + H(+). The enzyme catalyses a cholesterol ester + H2O = cholesterol + a fatty acid + H(+). It catalyses the reaction prostaglandin F2alpha 1-glyceryl ester + H2O = prostaglandin F2alpha + glycerol + H(+). Its function is as follows. Involved in the detoxification of xenobiotics and in the activation of ester and amide prodrugs. Hydrolyzes aromatic and aliphatic esters, but has no catalytic activity toward amides or a fatty acyl-CoA ester. Displays fatty acid ethyl ester synthase activity, catalyzing the ethyl esterification of oleic acid to ethyloleate. Converts monoacylglycerides to free fatty acids and glycerol. Hydrolyzes of 2-arachidonoylglycerol and prostaglandins. Hydrolyzes cellular cholesteryl esters to free cholesterols and promotes reverse cholesterol transport (RCT) by facilitating both the initial and final steps in the process. First of all, allows free cholesterol efflux from macrophages to extracellular cholesterol acceptors and secondly, releases free cholesterol from lipoprotein-delivered cholesteryl esters in the liver for bile acid synthesis or direct secretion into the bile. This Mus musculus (Mouse) protein is Liver carboxylesterase 1.